We begin with the raw amino-acid sequence, 233 residues long: Large ribosomal subunit protein uL1 (233 aa).

It belongs to the universal ribosomal protein uL1 family. Part of the 50S ribosomal subunit.

In terms of biological role, binds directly to 23S rRNA. The L1 stalk is quite mobile in the ribosome, and is involved in E site tRNA release. Protein L1 is also a translational repressor protein, it controls the translation of the L11 operon by binding to its mRNA. The sequence is that of Large ribosomal subunit protein uL1 from Shewanella woodyi (strain ATCC 51908 / MS32).